The chain runs to 1415 residues: DNA-directed RNA polymerase subunit beta' (1415 aa).

Zn(2+) contacts are provided by Cys70, Cys72, Cys85, and Cys88. Mg(2+)-binding residues include Asp461, Asp463, and Asp465. Zn(2+) contacts are provided by Cys820, Cys894, Cys901, and Cys904. The interval 1382-1415 (ERERAQAIADEEQSLFIEPPPVVQATTEGEGDNA) is disordered.

This sequence belongs to the RNA polymerase beta' chain family. In terms of assembly, the RNAP catalytic core consists of 2 alpha, 1 beta, 1 beta' and 1 omega subunit. When a sigma factor is associated with the core the holoenzyme is formed, which can initiate transcription. Mg(2+) serves as cofactor. It depends on Zn(2+) as a cofactor.

It catalyses the reaction RNA(n) + a ribonucleoside 5'-triphosphate = RNA(n+1) + diphosphate. In terms of biological role, DNA-dependent RNA polymerase catalyzes the transcription of DNA into RNA using the four ribonucleoside triphosphates as substrates. The polypeptide is DNA-directed RNA polymerase subunit beta' (Cupriavidus pinatubonensis (strain JMP 134 / LMG 1197) (Cupriavidus necator (strain JMP 134))).